The sequence spans 440 residues: D-serine dehydratase (440 aa).

The residue at position 116 (Lys116) is an N6-(pyridoxal phosphate)lysine.

This sequence belongs to the serine/threonine dehydratase family. DsdA subfamily. As to quaternary structure, monomer. Requires pyridoxal 5'-phosphate as cofactor.

It catalyses the reaction D-serine = pyruvate + NH4(+). In Salmonella choleraesuis (strain SC-B67), this protein is D-serine dehydratase.